Consider the following 275-residue polypeptide: Large ribosomal subunit protein uL2 (275 aa).

The disordered stretch occupies residues 212-259; that stretch reads RWKGIRPTNRGVTMNPVDHPHGGGEGKTSGGRHPVTPWGQPTRGYKTR.

Belongs to the universal ribosomal protein uL2 family. In terms of assembly, part of the 50S ribosomal subunit. Forms a bridge to the 30S subunit in the 70S ribosome.

One of the primary rRNA binding proteins. Required for association of the 30S and 50S subunits to form the 70S ribosome, for tRNA binding and peptide bond formation. It has been suggested to have peptidyltransferase activity; this is somewhat controversial. Makes several contacts with the 16S rRNA in the 70S ribosome. In Acidobacterium capsulatum (strain ATCC 51196 / DSM 11244 / BCRC 80197 / JCM 7670 / NBRC 15755 / NCIMB 13165 / 161), this protein is Large ribosomal subunit protein uL2.